The sequence spans 269 residues: Energy-coupling factor transporter ATP-binding protein EcfA1 (269 aa).

Residues 8–242 (IVFKNVSFQY…AEGLTTIGLD (235 aa)) enclose the ABC transporter domain. ATP is bound at residue 42-49 (GHNGSGKS).

It belongs to the ABC transporter superfamily. Energy-coupling factor EcfA family. As to quaternary structure, forms a stable energy-coupling factor (ECF) transporter complex composed of 2 membrane-embedded substrate-binding proteins (S component), 2 ATP-binding proteins (A component) and 2 transmembrane proteins (T component).

Its subcellular location is the cell membrane. In terms of biological role, ATP-binding (A) component of a common energy-coupling factor (ECF) ABC-transporter complex. Unlike classic ABC transporters this ECF transporter provides the energy necessary to transport a number of different substrates. This chain is Energy-coupling factor transporter ATP-binding protein EcfA1, found in Staphylococcus aureus (strain bovine RF122 / ET3-1).